The chain runs to 292 residues: Fat storage-inducing transmembrane protein 1 (292 aa).

Residues 1–18 (MERGPVVGAGLGAGARIQ) are Lumenal-facing. The chain crosses the membrane as a helical span at residues 19–39 (ALLGCLLKVLLWVASALLYFG). The Cytoplasmic portion of the chain corresponds to 40–54 (SEQAARLLGSPCLRR). The chain crosses the membrane as a helical span at residues 55 to 75 (LYHAWLAAVVIFGPLLQFHVN). Over 76–94 (PRTIFASHGNFFNIKFVNS) the chain is Lumenal. The chain crosses the membrane as a helical span at residues 95-115 (AWGWTCTFLGGFVLLVVFLAT). Residues 116 to 141 (RRVAVTARHLSRLVVGAAVWRGAGRA) are Cytoplasmic-facing. A helical membrane pass occupies residues 142–162 (FLLIEDLTGSCFEPLPQGLLL). Over 163-187 (HELPDRRSCLAAGHQWRGYTVSSHT) the chain is Lumenal. His-186 is a catalytic residue. A helical transmembrane segment spans residues 188 to 208 (FLLTFCCLLMAEEAAVFAKYL). At 209-220 (AHGLPAGAPLRL) the chain is on the cytoplasmic side. A helical transmembrane segment spans residues 221-241 (VFLLNVLLLGLWNFLLLCTVI). At 242–249 (YFHQYTHK) the chain is on the lumenal side. Residue His-244 is part of the active site. A helical membrane pass occupies residues 250–270 (VVGAAVGTFAWYLTYGSWYHQ). The Cytoplasmic segment spans residues 271–292 (PWSPGSPGHGLFPRPHSSRKHN).

This sequence belongs to the FIT family. FIT1 subfamily. As to expression, primarily expressed in heart and skeletal muscle.

It is found in the endoplasmic reticulum membrane. Functionally, plays an important role in the formation of lipid droplets (LDs) which are storage organelles at the center of lipid and energy homeostasis. Directly binds to diacylglycerol (DAGs) and triacylglycerol. The polypeptide is Fat storage-inducing transmembrane protein 1 (Homo sapiens (Human)).